The sequence spans 473 residues: 6-phosphogluconate dehydrogenase, decarboxylating (473 aa).

NADP(+) is bound by residues 10–15 (GMAVMG), 33–35 (NRT), 74–76 (VKS), and asparagine 102. Residues asparagine 102 and 128-130 (SGG) each bind substrate. Catalysis depends on lysine 182, which acts as the Proton acceptor. 185–186 (HN) provides a ligand contact to substrate. The active-site Proton donor is glutamate 189. Substrate contacts are provided by tyrosine 190, lysine 260, arginine 287, arginine 446, and histidine 452.

Belongs to the 6-phosphogluconate dehydrogenase family. As to quaternary structure, homodimer.

The catalysed reaction is 6-phospho-D-gluconate + NADP(+) = D-ribulose 5-phosphate + CO2 + NADPH. It functions in the pathway carbohydrate degradation; pentose phosphate pathway; D-ribulose 5-phosphate from D-glucose 6-phosphate (oxidative stage): step 3/3. In terms of biological role, catalyzes the oxidative decarboxylation of 6-phosphogluconate to ribulose 5-phosphate and CO(2), with concomitant reduction of NADP to NADPH. This chain is 6-phosphogluconate dehydrogenase, decarboxylating (gnd), found in Buchnera aphidicola subsp. Schizaphis graminum (strain Sg).